A 654-amino-acid chain; its full sequence is Cysteine-rich receptor-like protein kinase 40 (654 aa).

An N-terminal signal peptide occupies residues 1–27 (MGKCSALMIFLSSSLLLVLQTLHVVNA). Gnk2-homologous domains lie at 28-131 (VKCF…NQST) and 143-250 (WPSP…LYSF). Over 28 to 287 (VKCFGNSFNG…VKKGKSIGYG (260 aa)) the chain is Extracellular. N-linked (GlcNAc...) asparagine glycans are attached at residues N38, N65, N128, N154, N167, and N256. Residues 288-308 (GIIAIVVVFTFINLLVFIGFI) traverse the membrane as a helical segment. The Cytoplasmic segment spans residues 309 to 654 (KVYARRGKLN…DDVFTELSCR (346 aa)). Positions 348–619 (FSSENTLGQG…VIIWLGSETI (272 aa)) constitute a Protein kinase domain. Residues 354–362 (LGQGGFGTV) and K376 each bind ATP. At Y421 the chain carries Phosphotyrosine. The Proton acceptor role is filled by D473. S477 carries the phosphoserine modification. Phosphothreonine is present on T513. Position 521 is a phosphotyrosine (Y521).

Belongs to the protein kinase superfamily. Ser/Thr protein kinase family. CRK subfamily.

It is found in the membrane. The catalysed reaction is L-seryl-[protein] + ATP = O-phospho-L-seryl-[protein] + ADP + H(+). It carries out the reaction L-threonyl-[protein] + ATP = O-phospho-L-threonyl-[protein] + ADP + H(+). The sequence is that of Cysteine-rich receptor-like protein kinase 40 (CRK40) from Arabidopsis thaliana (Mouse-ear cress).